The following is a 300-amino-acid chain: GTPase Era (300 aa).

The Era-type G domain occupies 6-173; the sequence is KSGFVAIVGR…MDVLVEQMPE (168 aa). Residues 14-21 form a G1 region; that stretch reads GRPNVGKS. Position 14-21 (14-21) interacts with GTP; that stretch reads GRPNVGKS. Positions 40-44 are G2; the sequence is QTTRN. The segment at 61 to 64 is G3; it reads DTPG. GTP contacts are provided by residues 61 to 65 and 123 to 126; these read DTPGI and NKID. A G4 region spans residues 123–126; it reads NKID. Residues 152–154 are G5; the sequence is ISA. The 78-residue stretch at 204 to 281 folds into the KH type-2 domain; it reads TRDEIPHSVA…YLELWVKVQK (78 aa).

The protein belongs to the TRAFAC class TrmE-Era-EngA-EngB-Septin-like GTPase superfamily. Era GTPase family. In terms of assembly, monomer.

The protein localises to the cytoplasm. Its subcellular location is the cell membrane. An essential GTPase that binds both GDP and GTP, with rapid nucleotide exchange. Plays a role in 16S rRNA processing and 30S ribosomal subunit biogenesis and possibly also in cell cycle regulation and energy metabolism. The chain is GTPase Era from Enterococcus faecalis (strain ATCC 700802 / V583).